We begin with the raw amino-acid sequence, 429 residues long: MANVVVVGSQWGDEGKGKIVDWLSERADVIVRYQGGHNAGHTLVIDGVSYKLSLLPSGLVRGKLSVIGNGVVVDPHHFVAEVEKLRGQGIDVTPDVLRVAENAPLILSIHRELDAMREGSNSGLKIGTTKRGIGPAYEDKVGRRAIRVIDLTEPETLRPKVERLLAHHNSLRRGMGLEEIAVETILTELTSVADQILPYIDQVWRVLDERRKAGARILFEGAQGALLDNDHGTYPFVTSSNTVAGQAAAGSGLGPTAIGYVLGITKAYTTRVGEGPFPTELNDEIGEFLGTKGHEFGVVTGRKRRCGWFDAVIVRQTVRTSGINGIALTKLDVLDGLEEIKICVAYELDGKRIDYLPSSMGAQARVKPIYETLPGWSETTAGARSWNDLPAQTVKYVRHIEELIGAPVAMLSTSPEREDTILVTDPFHD.

GTP contacts are provided by residues 12-18 (GDEGKGK) and 40-42 (GHT). Catalysis depends on D13, which acts as the Proton acceptor. D13 and G40 together coordinate Mg(2+). Residues 13 to 16 (DEGK), 38 to 41 (NAGH), T129, R143, Q223, T238, and R302 contribute to the IMP site. Catalysis depends on H41, which acts as the Proton donor. 298 to 304 (VVTGRKR) contacts substrate. GTP contacts are provided by residues R304, 330–332 (KLD), and 412–414 (STS).

The protein belongs to the adenylosuccinate synthetase family. In terms of assembly, homodimer. The cofactor is Mg(2+).

It is found in the cytoplasm. The enzyme catalyses IMP + L-aspartate + GTP = N(6)-(1,2-dicarboxyethyl)-AMP + GDP + phosphate + 2 H(+). The protein operates within purine metabolism; AMP biosynthesis via de novo pathway; AMP from IMP: step 1/2. Its function is as follows. Plays an important role in the de novo pathway of purine nucleotide biosynthesis. Catalyzes the first committed step in the biosynthesis of AMP from IMP. The sequence is that of Adenylosuccinate synthetase from Brucella suis (strain ATCC 23445 / NCTC 10510).